Consider the following 265-residue polypeptide: 3-methyl-2-oxobutanoate hydroxymethyltransferase (265 aa).

Positions 44 and 83 each coordinate Mg(2+). 3-methyl-2-oxobutanoate is bound by residues 44-45, aspartate 83, and lysine 113; that span reads DS. Glutamate 115 contributes to the Mg(2+) binding site. Catalysis depends on glutamate 183, which acts as the Proton acceptor.

The protein belongs to the PanB family. As to quaternary structure, homodecamer; pentamer of dimers. Requires Mg(2+) as cofactor.

It localises to the cytoplasm. The enzyme catalyses 3-methyl-2-oxobutanoate + (6R)-5,10-methylene-5,6,7,8-tetrahydrofolate + H2O = 2-dehydropantoate + (6S)-5,6,7,8-tetrahydrofolate. The protein operates within cofactor biosynthesis; (R)-pantothenate biosynthesis; (R)-pantoate from 3-methyl-2-oxobutanoate: step 1/2. Its function is as follows. Catalyzes the reversible reaction in which hydroxymethyl group from 5,10-methylenetetrahydrofolate is transferred onto alpha-ketoisovalerate to form ketopantoate. This is 3-methyl-2-oxobutanoate hydroxymethyltransferase from Leptospira borgpetersenii serovar Hardjo-bovis (strain JB197).